A 168-amino-acid chain; its full sequence is Photosystem I assembly protein Ycf3 (168 aa).

TPR repeat units lie at residues 35-68 (AFTY…EIDP), 72-105 (SYIL…NPFL), and 120-153 (GEQA…TPGN).

This sequence belongs to the Ycf3 family.

It localises to the plastid. The protein resides in the chloroplast thylakoid membrane. In terms of biological role, essential for the assembly of the photosystem I (PSI) complex. May act as a chaperone-like factor to guide the assembly of the PSI subunits. This Liriodendron tulipifera (Tuliptree) protein is Photosystem I assembly protein Ycf3.